Reading from the N-terminus, the 349-residue chain is 4-hydroxythreonine-4-phosphate dehydrogenase (349 aa).

Position 135 (Thr135) interacts with substrate. A divalent metal cation is bound by residues His170, His215, and His276. The substrate site is built by Lys284, Asn293, and Arg302.

The protein belongs to the PdxA family. Homodimer. A divalent metal cation is required as a cofactor.

The protein resides in the cytoplasm. The enzyme catalyses 4-(phosphooxy)-L-threonine + NAD(+) = 3-amino-2-oxopropyl phosphate + CO2 + NADH. It functions in the pathway cofactor biosynthesis; pyridoxine 5'-phosphate biosynthesis; pyridoxine 5'-phosphate from D-erythrose 4-phosphate: step 4/5. In terms of biological role, catalyzes the NAD(P)-dependent oxidation of 4-(phosphooxy)-L-threonine (HTP) into 2-amino-3-oxo-4-(phosphooxy)butyric acid which spontaneously decarboxylates to form 3-amino-2-oxopropyl phosphate (AHAP). This Synechococcus sp. (strain JA-3-3Ab) (Cyanobacteria bacterium Yellowstone A-Prime) protein is 4-hydroxythreonine-4-phosphate dehydrogenase.